Here is a 318-residue protein sequence, read N- to C-terminus: Bis(5'-nucleosyl)-tetraphosphatase, symmetrical (318 aa).

Residues 269–318 form a disordered region; the sequence is PGREVTGPAPVARAPRRPRERLGRQRSRGNRGNAGNTAVPAKPPVDTPQD. Residues 282–297 are compositionally biased toward basic residues; sequence APRRPRERLGRQRSRG. Positions 309 to 318 are enriched in pro residues; that stretch reads AKPPVDTPQD.

This sequence belongs to the Ap4A hydrolase family.

The enzyme catalyses P(1),P(4)-bis(5'-adenosyl) tetraphosphate + H2O = 2 ADP + 2 H(+). Functionally, hydrolyzes diadenosine 5',5'''-P1,P4-tetraphosphate to yield ADP. The chain is Bis(5'-nucleosyl)-tetraphosphatase, symmetrical from Xanthomonas oryzae pv. oryzae (strain MAFF 311018).